Reading from the N-terminus, the 674-residue chain is Pre-mRNA-splicing factor cwf4 (674 aa).

16 HAT repeats span residues 50–82 (EFQG…WELD), 84–116 (KEFA…CEMK), 118–150 (RNIN…MEEM), 152–183 (GNIT…MERR), 185–216 (HENE…FEEE), 218–253 (GNAA…FEIR), 255–289 (KEYE…FEKQ), 299–331 (TVLD…LEES), 333–367 (GDIN…IWLN), 377–413 (KDVD…FELR), 415–446 (RKID…FEDA), 448–480 (KQFD…LETK), 482–516 (GDSD…FEFE), 518–549 (MEYG…FEIA), 567–608 (TAVV…MHGT), and 610–643 (DTRK…YLFP).

The protein belongs to the crooked-neck family. As to quaternary structure, belongs to the 40S cdc5-associated complex (or cwf complex), a spliceosome sub-complex reminiscent of a late-stage spliceosome composed of the U2, U5 and U6 snRNAs and at least brr2, cdc5, cwf2/prp3, cwf3/syf1, cwf4/syf3, cwf5/ecm2, spp42/cwf6, cwf7/spf27, cwf8, cwf9, cwf10, cwf11, cwf12, prp45/cwf13, cwf14, cwf15, cwf16, cwf17, cwf18, cwf19, cwf20, cwf21, cwf22, cwf23, cwf24, cwf25, cwf26, cyp7/cwf27, cwf28, cwf29/ist3, lea1, msl1, prp5/cwf1, prp10, prp12/sap130, prp17, prp22, sap61, sap62, sap114, sap145, slu7, smb1, smd1, smd3, smf1, smg1 and syf2.

Its subcellular location is the nucleus. Its function is as follows. Involved in pre-mRNA splicing and cell cycle progression. Required for the spliceosome assembly and initiation of the DNA replication. The polypeptide is Pre-mRNA-splicing factor cwf4 (cwf4) (Schizosaccharomyces pombe (strain 972 / ATCC 24843) (Fission yeast)).